The following is a 128-amino-acid chain: uncharacterized protein (128 aa).

A disordered region spans residues 1-50 (MSNEQGKGMGFFGNKGKPASEKKDEKKTKLDLDYKPDLNPSTPYDPTLPV). The span at 18-36 (PASEKKDEKKTKLDLDYKP) shows a compositional bias: basic and acidic residues.

This is an uncharacterized protein from Bacillus anthracis.